The sequence spans 118 residues: Large ribosomal subunit protein bL19 (118 aa).

The protein belongs to the bacterial ribosomal protein bL19 family.

This protein is located at the 30S-50S ribosomal subunit interface and may play a role in the structure and function of the aminoacyl-tRNA binding site. This chain is Large ribosomal subunit protein bL19, found in Frankia alni (strain DSM 45986 / CECT 9034 / ACN14a).